Here is a 622-residue protein sequence, read N- to C-terminus: MVTPGNIGSFTVWDYLVFALMLLISAVIGIYYAFAGGGQKTSKDFLMGGRSMTAVPVALSLTASFMSAVTVLGTPAEVYRFGAMFIIFAFSYTIVVIISSEVFLPVFYRLGITSTYEYLELRFNKFVRLLGTILFIIQTVLYTGIVIYAPALALNQVTGFDLWGAVVATGVVCTFYCTMGGLKAVVWTDVFQVGIMVAGFTSVIIRAVVVQGGIGPILNDSYYGDRLNFWDFDPNPLKRHTFWTIVVGGTFTWTGIYGVNQAQVQRYIACKTRFQAKMSLYVNLIGLWAILACAVLSGLAMYSIYKDCDPWTAKFVSAPDQLMPYLALDILRDYPGLPGLFVSCAYSGTLSTVSSSINALAAVTVEDLIKPYIRSLSEKKMSWISKGTSLLYGAICIGMAGIASLMGGLLQAALSIFGMVGGPLLGLFSLGILFPFVNSLGAVIGLLSGFAISLWVGIGSQIYAPSPSSSLPKPLSLEGCNFTSIESNWTSTVMPMMTTLIPETQVSSRPELADSWYSLSYLYFSTIGTIVAVLVGVIVSLLSGGLKQNVNREFLLTSEDFSYLNVLFSPCKEKGQEEKVEVLNWKARRTDNDMEQGTDNPAFNNMEMTSTEKGEKTNGITA.

Topologically, residues 1-15 are extracellular; it reads MVTPGNIGSFTVWDY. Residues 16–36 traverse the membrane as a helical segment; sequence LVFALMLLISAVIGIYYAFAG. The Cytoplasmic portion of the chain corresponds to 37–51; the sequence is GGQKTSKDFLMGGRS. Residues 52–72 traverse the membrane as a helical segment; the sequence is MTAVPVALSLTASFMSAVTVL. At 73–83 the chain is on the extracellular side; it reads GTPAEVYRFGA. Residues 84-104 form a helical membrane-spanning segment; sequence MFIIFAFSYTIVVIISSEVFL. Over 105 to 128 the chain is Cytoplasmic; that stretch reads PVFYRLGITSTYEYLELRFNKFVR. A helical transmembrane segment spans residues 129-149; the sequence is LLGTILFIIQTVLYTGIVIYA. The Extracellular segment spans residues 150 to 161; sequence PALALNQVTGFD. The helical transmembrane segment at 162–182 threads the bilayer; that stretch reads LWGAVVATGVVCTFYCTMGGL. The Cytoplasmic portion of the chain corresponds to 183–184; the sequence is KA. Residues 185–205 traverse the membrane as a helical segment; sequence VVWTDVFQVGIMVAGFTSVII. Residues 206-241 lie on the Extracellular side of the membrane; it reads RAVVVQGGIGPILNDSYYGDRLNFWDFDPNPLKRHT. An N-linked (GlcNAc...) asparagine glycan is attached at asparagine 219. The helical transmembrane segment at 242–262 threads the bilayer; the sequence is FWTIVVGGTFTWTGIYGVNQA. At 263-283 the chain is on the cytoplasmic side; the sequence is QVQRYIACKTRFQAKMSLYVN. Residues 284 to 304 traverse the membrane as a helical segment; sequence LIGLWAILACAVLSGLAMYSI. The Extracellular segment spans residues 305–336; it reads YKDCDPWTAKFVSAPDQLMPYLALDILRDYPG. A helical membrane pass occupies residues 337-357; the sequence is LPGLFVSCAYSGTLSTVSSSI. The Cytoplasmic portion of the chain corresponds to 358-389; that stretch reads NALAAVTVEDLIKPYIRSLSEKKMSWISKGTS. The helical transmembrane segment at 390–410 threads the bilayer; the sequence is LLYGAICIGMAGIASLMGGLL. At 411-415 the chain is on the extracellular side; that stretch reads QAALS. A helical membrane pass occupies residues 416–436; sequence IFGMVGGPLLGLFSLGILFPF. Topologically, residues 437–438 are cytoplasmic; the sequence is VN. A helical transmembrane segment spans residues 439–459; sequence SLGAVIGLLSGFAISLWVGIG. Residues 460–521 lie on the Extracellular side of the membrane; it reads SQIYAPSPSS…LADSWYSLSY (62 aa). 2 N-linked (GlcNAc...) asparagine glycosylation sites follow: asparagine 481 and asparagine 488. Residues 522 to 542 form a helical membrane-spanning segment; that stretch reads LYFSTIGTIVAVLVGVIVSLL. The Cytoplasmic portion of the chain corresponds to 543–622; that stretch reads SGGLKQNVNR…KGEKTNGITA (80 aa). Residues 591 to 622 form a disordered region; that stretch reads DNDMEQGTDNPAFNNMEMTSTEKGEKTNGITA. Polar residues predominate over residues 595 to 609; that stretch reads EQGTDNPAFNNMEMT.

Belongs to the sodium:solute symporter (SSF) (TC 2.A.21) family. As to expression, in the gastrula and neurula stages, expressed in the gastrula anterior endoderm and in the entire circumference of the blastopore lip superficial endoderm. At tailbud stages, abundant expression observed in the ventral midgut region. As development proceeds expression becomes restricted to the liver diverticulum and ultimately to the presumptive gallbladder, by tadpole stage 35. Also present in pronephros and the tip of the tail.

The protein resides in the apical cell membrane. The enzyme catalyses (S)-lactate(out) + 2 Na(+)(out) = (S)-lactate(in) + 2 Na(+)(in). It catalyses the reaction propanoate(out) + 2 Na(+)(out) = propanoate(in) + 2 Na(+)(in). It carries out the reaction pyruvate(out) + 2 Na(+)(out) = pyruvate(in) + 2 Na(+)(in). The catalysed reaction is acetate(out) + 2 Na(+)(out) = acetate(in) + 2 Na(+)(in). The enzyme catalyses butanoate(out) + 2 Na(+)(out) = butanoate(in) + 2 Na(+)(in). It catalyses the reaction nicotinate(out) + 2 Na(+)(out) = nicotinate(in) + 2 Na(+)(in). It carries out the reaction (R)-3-hydroxybutanoate(out) + 2 Na(+)(out) = (R)-3-hydroxybutanoate(in) + 2 Na(+)(in). The catalysed reaction is acetoacetate(out) + 2 Na(+)(out) = acetoacetate(in) + 2 Na(+)(in). The enzyme catalyses 4-methyl-2-oxopentanoate(out) + 2 Na(+)(out) = 4-methyl-2-oxopentanoate(in) + 2 Na(+)(in). It catalyses the reaction 5-oxo-L-proline(out) + 2 Na(+)(out) = 5-oxo-L-proline(in) + 2 Na(+)(in). It carries out the reaction iodide(out) = iodide(in). The catalysed reaction is chloride(in) = chloride(out). The enzyme catalyses nitrate(in) = nitrate(out). It catalyses the reaction bromide(in) = bromide(out). In terms of biological role, acts as an electrogenic sodium (Na(+)) and chloride (Cl-)-dependent sodium-coupled solute transporter, including transport of monocarboxylates (short-chain fatty acids including L-lactate, D-lactate, pyruvate, acetate, propionate, valerate and butyrate), mocarboxylate drugs (nicotinate, benzoate, salicylate and 5-aminosalicylate) and ketone bodies (beta-D-hydroxybutyrate, acetoacetate and alpha-ketoisocaproate), with a Na(+):substrate stoichiometry of between 4:1 and 2:1. Catalyzes passive carrier mediated diffusion of iodide. Mediates iodide transport from the thyrocyte into the colloid lumen through the apical membrane. Mediates sodium-coupled electrogenic transport of pyroglutamate (5-oxo-L-proline). Can mediate the transport of chloride, bromide, iodide and nitrate ions when external concentration of sodium ions is reduced. The polypeptide is Sodium-coupled monocarboxylate transporter 1 (Xenopus laevis (African clawed frog)).